We begin with the raw amino-acid sequence, 564 residues long: Ribulokinase (564 aa).

Belongs to the ribulokinase family.

The enzyme catalyses D-ribulose + ATP = D-ribulose 5-phosphate + ADP + H(+). It carries out the reaction L-ribulose + ATP = L-ribulose 5-phosphate + ADP + H(+). The protein operates within carbohydrate degradation; L-arabinose degradation via L-ribulose; D-xylulose 5-phosphate from L-arabinose (bacterial route): step 2/3. This Anoxybacillus flavithermus (strain DSM 21510 / WK1) protein is Ribulokinase.